Here is a 916-residue protein sequence, read N- to C-terminus: Transmembrane channel-like protein 2-A (916 aa).

Positions 1 to 13 are enriched in basic and acidic residues; the sequence is MPKKSDTTRKLED. Residues 1–159 are disordered; that stretch reads MPKKSDTTRK…DEEDESMSEG (159 aa). Topologically, residues 1-271 are cytoplasmic; it reads MPKKSDTTRK…IFLRWMYGMN (271 aa). Over residues 14-26 the composition is skewed to acidic residues; it reads VGIEIDGDVDSAE. Composition is skewed to basic residues over residues 31–45 and 62–72; these read SKGK…GKRG and KGRRAANKKKP. Residues 97–107 are compositionally biased toward basic and acidic residues; that stretch reads NVRERGDGDKK. Residues 108–117 show a composition bias toward basic residues; sequence KSGKKGRRGG. Positions 118-138 are enriched in basic and acidic residues; the sequence is KKNEKGKGKDSDKDSDKDEKK. The segment covering 145 to 157 has biased composition (acidic residues); sequence DESDSDEEDESMS. The chain crosses the membrane as a helical span at residues 272-292; the sequence is LVLFSLTFGLVVIPEVLMGLP. The Extracellular segment spans residues 293 to 344; the sequence is YGSIPRKTVPREDQDTAMDYSVLTDFNGYCKYSVLFYGYYNNQRTIGFLKFR. Residues 345-365 form a helical membrane-spanning segment; that stretch reads LPLSYLMVGIGTFGYSLMVVI. Residues 366–438 are Cytoplasmic-facing; it reads RTMAKNADVG…ENIHLRRFLR (73 aa). Residues 439–459 form a helical membrane-spanning segment; the sequence is VLANFLITCTLGGSGYLIYFV. Residues 460 to 478 are Extracellular-facing; the sequence is VKRSQEFQNMDNLSWYEKN. Residues 479 to 499 traverse the membrane as a helical segment; that stretch reads ELEIIMSLLGLVGPMLFETIA. The Cytoplasmic segment spans residues 500-516; the sequence is ELEEYHPRIALKWQLGR. Residues 517–537 traverse the membrane as a helical segment; sequence IFALFLGNLYTFLLALFDEVN. Residues 538 to 649 are Extracellular-facing; that stretch reads AKLEEEESIK…EFDISGNVLG (112 aa). Residues 650-670 traverse the membrane as a helical segment; the sequence is LVFNQGMIWMGAFYAPGLVGI. At 671 to 704 the chain is on the cytoplasmic side; that stretch reads NVLRLLSSMYYQCWAVMACNVPHERVFKASKSNN. The chain crosses the membrane as a helical span at residues 705 to 725; the sequence is FYMGLLLLILFLSLLPVVYTI. Over 726–762 the chain is Extracellular; that stretch reads MSLPPSFDCGPFSGKERMFDVVMETIDLDLPAFMGTL. The chain crosses the membrane as a helical span at residues 763-783; the sequence is FGYVANPGLVISAVLLMVLAI. Topologically, residues 784 to 916 are cytoplasmic; the sequence is YYLNSVSEAY…RGQGPPPRRQ (133 aa). Positions 804-818 are enriched in basic and acidic residues; sequence MQMARDEEKNRRNNK. Residues 804–916 are disordered; the sequence is MQMARDEEKN…RGQGPPPRRQ (113 aa). The span at 883 to 892 shows a compositional bias: low complexity; sequence ARGPVTRAPG.

It belongs to the TMC family. In terms of assembly, interacts (via N-terminus) with both isoforms CD1 and CD3 of PCDH15A (via cytoplasmic domain); this interaction is required for mechanotransduction of the hair cells and correct localization of PCDH15A in hair bundles of the hair cells. In terms of tissue distribution, in adults, expression is restricted to the hair cells of inner ear and lateral line organ. Expressed at higher levels in the larval inner ear than in the lateral-line neuromasts.

It localises to the cell membrane. The enzyme catalyses Ca(2+)(in) = Ca(2+)(out). Functionally, pore-forming subunit of the mechanotransducer (MET) non-selective cation channel complex located at tips of hair-cell stereocilia. Highly permeable to calcium and likely transports monovalent cations. The polypeptide is Transmembrane channel-like protein 2-A (Danio rerio (Zebrafish)).